Reading from the N-terminus, the 201-residue chain is Large ribosomal subunit protein uL4 (201 aa).

Residues 45–71 (AQKTRAEVTGSGKKPWRQKGTGRARAG) form a disordered region.

This sequence belongs to the universal ribosomal protein uL4 family. As to quaternary structure, part of the 50S ribosomal subunit.

Functionally, one of the primary rRNA binding proteins, this protein initially binds near the 5'-end of the 23S rRNA. It is important during the early stages of 50S assembly. It makes multiple contacts with different domains of the 23S rRNA in the assembled 50S subunit and ribosome. Forms part of the polypeptide exit tunnel. This Shewanella loihica (strain ATCC BAA-1088 / PV-4) protein is Large ribosomal subunit protein uL4.